A 184-amino-acid chain; its full sequence is Photosystem I assembly protein Ycf4 (184 aa).

Transmembrane regions (helical) follow at residues 22 to 42 (LCWA…GTSS) and 57 to 77 (ILFF…LFIS).

The protein belongs to the Ycf4 family.

The protein resides in the plastid. The protein localises to the chloroplast thylakoid membrane. Its function is as follows. Seems to be required for the assembly of the photosystem I complex. This Daucus carota (Wild carrot) protein is Photosystem I assembly protein Ycf4.